We begin with the raw amino-acid sequence, 190 residues long: Threonylcarbamoyl-AMP synthase (190 aa).

One can recognise a YrdC-like domain in the interval 9–190; that stretch reads FLQLALARQT…IDIVTGQQFR (182 aa).

Belongs to the SUA5 family. TsaC subfamily.

The protein resides in the cytoplasm. The enzyme catalyses L-threonine + hydrogencarbonate + ATP = L-threonylcarbamoyladenylate + diphosphate + H2O. Its function is as follows. Required for the formation of a threonylcarbamoyl group on adenosine at position 37 (t(6)A37) in tRNAs that read codons beginning with adenine. Catalyzes the conversion of L-threonine, HCO(3)(-)/CO(2) and ATP to give threonylcarbamoyl-AMP (TC-AMP) as the acyladenylate intermediate, with the release of diphosphate. This Marinobacter nauticus (strain ATCC 700491 / DSM 11845 / VT8) (Marinobacter aquaeolei) protein is Threonylcarbamoyl-AMP synthase.